We begin with the raw amino-acid sequence, 541 residues long: Chaperonin GroEL, cyanelle (541 aa).

ATP contacts are provided by residues Thr29–Pro32, Asp86–Thr90, Gly413, Asn479–Ala481, and Asp495.

The protein belongs to the chaperonin (HSP60) family. As to quaternary structure, forms a cylinder of 14 subunits composed of two heptameric rings stacked back-to-back. Interacts with the co-chaperonin GroES.

The protein localises to the plastid. It is found in the cyanelle. It carries out the reaction ATP + H2O + a folded polypeptide = ADP + phosphate + an unfolded polypeptide.. Its function is as follows. Together with its co-chaperonin GroES, plays an essential role in assisting protein folding. The GroEL-GroES system forms a nano-cage that allows encapsulation of the non-native substrate proteins and provides a physical environment optimized to promote and accelerate protein folding. The polypeptide is Chaperonin GroEL, cyanelle (Cyanophora paradoxa).